The sequence spans 270 residues: ATP synthase subunit a (270 aa).

The next 5 helical transmembrane spans lie at 38-58 (VHID…GIFY), 98-118 (IAPL…MDLV), 143-163 (DVNI…YYSI), 208-228 (LFGN…MLPW), and 239-259 (AIFH…LTIV).

It belongs to the ATPase A chain family. F-type ATPases have 2 components, CF(1) - the catalytic core - and CF(0) - the membrane proton channel. CF(1) has five subunits: alpha(3), beta(3), gamma(1), delta(1), epsilon(1). CF(0) has three main subunits: a(1), b(2) and c(9-12). The alpha and beta chains form an alternating ring which encloses part of the gamma chain. CF(1) is attached to CF(0) by a central stalk formed by the gamma and epsilon chains, while a peripheral stalk is formed by the delta and b chains.

It is found in the cell inner membrane. Key component of the proton channel; it plays a direct role in the translocation of protons across the membrane. The protein is ATP synthase subunit a of Vibrio parahaemolyticus serotype O3:K6 (strain RIMD 2210633).